Consider the following 318-residue polypeptide: Ubiquitin-like domain-containing CTD phosphatase 1 (318 aa).

Residues 3 to 81 enclose the Ubiquitin-like domain; sequence LSLIIKWGGQ…IMMMGTREES (79 aa). The region spanning 133–294 is the FCP1 homology domain; it reads PREGKKLLVL…LKLSQYLKEI (162 aa). Residues aspartate 143, aspartate 145, and aspartate 253 each contribute to the Mg(2+) site.

Requires Mg(2+) as cofactor.

It is found in the nucleus. The enzyme catalyses O-phospho-L-seryl-[protein] + H2O = L-seryl-[protein] + phosphate. It catalyses the reaction O-phospho-L-threonyl-[protein] + H2O = L-threonyl-[protein] + phosphate. Functionally, dephosphorylates 26S nuclear proteasomes, thereby decreasing their proteolytic activity. Recruited to the 19S regulatory particle of the 26S proteasome where it dephosphorylates 19S component psmc2 which impairs psmc2 ATPase activity and disrupts 26S proteasome assembly. Has also been reported to stimulate the proteolytic activity of the 26S proteasome. In Xenopus tropicalis (Western clawed frog), this protein is Ubiquitin-like domain-containing CTD phosphatase 1 (ublcp1).